Reading from the N-terminus, the 174-residue chain is Serine protease 2 (174 aa).

Cysteine 15 and cysteine 36 are oxidised to a cystine. Residues histidine 35, aspartate 65, and serine 147 each act as charge relay system in the active site. Cysteine 141 and cysteine 168 form a disulfide bridge.

Belongs to the peptidase S1 family.

The protein resides in the secreted. Its function is as follows. Broad substrate specificity. The sequence is that of Serine protease 2 from Streptomyces fradiae (Streptomyces roseoflavus).